We begin with the raw amino-acid sequence, 96 residues long: Co-chaperonin GroES (96 aa).

It belongs to the GroES chaperonin family. In terms of assembly, heptamer of 7 subunits arranged in a ring. Interacts with the chaperonin GroEL.

The protein localises to the cytoplasm. Its function is as follows. Together with the chaperonin GroEL, plays an essential role in assisting protein folding. The GroEL-GroES system forms a nano-cage that allows encapsulation of the non-native substrate proteins and provides a physical environment optimized to promote and accelerate protein folding. GroES binds to the apical surface of the GroEL ring, thereby capping the opening of the GroEL channel. The chain is Co-chaperonin GroES from Hydrogenobaculum sp. (strain Y04AAS1).